Here is a 263-residue protein sequence, read N- to C-terminus: Acyl-[acyl-carrier-protein]--UDP-N-acetylglucosamine O-acyltransferase (263 aa).

Belongs to the transferase hexapeptide repeat family. LpxA subfamily. In terms of assembly, homotrimer.

The protein localises to the cytoplasm. The catalysed reaction is a (3R)-hydroxyacyl-[ACP] + UDP-N-acetyl-alpha-D-glucosamine = a UDP-3-O-[(3R)-3-hydroxyacyl]-N-acetyl-alpha-D-glucosamine + holo-[ACP]. It participates in glycolipid biosynthesis; lipid IV(A) biosynthesis; lipid IV(A) from (3R)-3-hydroxytetradecanoyl-[acyl-carrier-protein] and UDP-N-acetyl-alpha-D-glucosamine: step 1/6. Involved in the biosynthesis of lipid A, a phosphorylated glycolipid that anchors the lipopolysaccharide to the outer membrane of the cell. This chain is Acyl-[acyl-carrier-protein]--UDP-N-acetylglucosamine O-acyltransferase, found in Xanthomonas euvesicatoria pv. vesicatoria (strain 85-10) (Xanthomonas campestris pv. vesicatoria).